Here is a 135-residue protein sequence, read N- to C-terminus: MSEKNKLPKGIIVLKTLSMPENINANGDIFGGWIMSQMDLGGAILAKEISGGKVATVRVDSINFLKSVSVGDIVNCYANCIKIGKSSIKINVEIWIKKIYSKPLGQYYCAAEAIFIYVAINKTGQPRELLPMSII.

Residues 8-123 (PKGIIVLKTL…IFIYVAINKT (116 aa)) form the HotDog ACOT-type domain.

It belongs to the acyl coenzyme A hydrolase family.

This is an uncharacterized protein from Buchnera aphidicola subsp. Acyrthosiphon pisum (strain APS) (Acyrthosiphon pisum symbiotic bacterium).